An 856-amino-acid chain; its full sequence is DNA mismatch repair protein MutS (856 aa).

Residue 618 to 625 (GPNMGGKS) coordinates ATP.

This sequence belongs to the DNA mismatch repair MutS family.

This protein is involved in the repair of mismatches in DNA. It is possible that it carries out the mismatch recognition step. This protein has a weak ATPase activity. The sequence is that of DNA mismatch repair protein MutS from Shewanella baltica (strain OS185).